The primary structure comprises 100 residues: Urease subunit gamma (100 aa).

The protein belongs to the urease gamma subunit family. In terms of assembly, heterotrimer of UreA (gamma), UreB (beta) and UreC (alpha) subunits. Three heterotrimers associate to form the active enzyme.

Its subcellular location is the cytoplasm. It carries out the reaction urea + 2 H2O + H(+) = hydrogencarbonate + 2 NH4(+). The protein operates within nitrogen metabolism; urea degradation; CO(2) and NH(3) from urea (urease route): step 1/1. This is Urease subunit gamma from Nostoc sp. (strain PCC 7120 / SAG 25.82 / UTEX 2576).